The primary structure comprises 185 residues: Protein GrpE (185 aa).

The tract at residues 1–44 (MSEEELTNGPGPEPQPEPLEVESAPLEAAPAGEPDKALLEAQQQ) is disordered.

Belongs to the GrpE family. In terms of assembly, homodimer.

Its subcellular location is the cytoplasm. Its function is as follows. Participates actively in the response to hyperosmotic and heat shock by preventing the aggregation of stress-denatured proteins, in association with DnaK and GrpE. It is the nucleotide exchange factor for DnaK and may function as a thermosensor. Unfolded proteins bind initially to DnaJ; upon interaction with the DnaJ-bound protein, DnaK hydrolyzes its bound ATP, resulting in the formation of a stable complex. GrpE releases ADP from DnaK; ATP binding to DnaK triggers the release of the substrate protein, thus completing the reaction cycle. Several rounds of ATP-dependent interactions between DnaJ, DnaK and GrpE are required for fully efficient folding. The sequence is that of Protein GrpE from Methylococcus capsulatus (strain ATCC 33009 / NCIMB 11132 / Bath).